Here is a 208-residue protein sequence, read N- to C-terminus: Endoplasmic reticulum vesicle protein 25 (208 aa).

The first 15 residues, 1 to 15 (MKFLLLLLLAPFISA), serve as a signal peptide directing secretion. The Lumenal portion of the chain corresponds to 16–177 (LRFDLKAESK…TNESTNERVR (162 aa)). Positions 28-118 (QMCIRDFVSE…KRAIELDIES (91 aa)) constitute a GOLD domain. A helical membrane pass occupies residues 178–198 (NFSVLVIIVLTSLGAWQVNYL). Residues 199–208 (KNYFKSKHII) are Cytoplasmic-facing.

It belongs to the EMP24/GP25L family.

It is found in the endoplasmic reticulum membrane. The protein localises to the golgi apparatus membrane. Functionally, constituent of COPII-coated endoplasmic reticulum-derived transport vesicles. Required for efficient transport of a subset of secretory proteins to the Golgi. Facilitates retrograde transport from the Golgi to the endoplasmic reticulum. In Candida glabrata (strain ATCC 2001 / BCRC 20586 / JCM 3761 / NBRC 0622 / NRRL Y-65 / CBS 138) (Yeast), this protein is Endoplasmic reticulum vesicle protein 25 (ERV25).